A 1329-amino-acid chain; its full sequence is Synergin gamma (1329 aa).

The stretch at 112–152 (MQKQFAEEQQKRFEQQQKLLEEERKRRQFEEQKQKLRLLSS) forms a coiled coil. Positions 175 to 211 (GFSRDAKMHPTPASHPKKPDCPTSSHSTKTVSPSSAF) are disordered. The segment covering 197 to 209 (TSSHSTKTVSPSS) has biased composition (low complexity). Residues 393-504 (NESLVPDAYK…TPVSQPTAMT (112 aa)) enclose the EH domain. The DFXDF motif 1 motif lies at 555–559 (DFQDF). Ser-571 bears the Phosphoserine mark. A compositionally biased stretch (polar residues) spans 578 to 594 (VPASSKTSNSQHGNSAP). A disordered region spans residues 578–600 (VPASSKTSNSQHGNSAPSLLIPL). Lys-609 is subject to N6-acetyllysine. The interaction with AP1G1 stretch occupies residues 614–878 (KGISAEKPSE…ADFHSSKFSS (265 aa)). Disordered regions lie at residues 661–701 (GTDD…TQTQ) and 730–753 (AFST…PASL). Ser-676 carries the post-translational modification Phosphoserine. An interaction with AP1G1, AP1G2 and GGA1 region spans residues 761–773 (LADDFGEFNLFGE). The DFXDF motif 2 motif lies at 785 to 789 (DFADF). The tract at residues 797-835 (IPSEPKADDKYEALREEGSPGALSTSTVEGAHNPPVSSS) is disordered. Residues 801 to 814 (PKADDKYEALREEG) show a composition bias toward basic and acidic residues. Position 815 is a phosphoserine (Ser-815). At Lys-836 the chain carries N6-acetyllysine. Residues Ser-844 and Ser-864 each carry the phosphoserine modification. 3 disordered regions span residues 856-922 (KENT…DSED), 941-1042 (HVMS…FGEF), and 1088-1113 (SLSL…RDRS). A compositionally biased stretch (basic and acidic residues) spans 864–873 (SDGDFADFHS). Residues 867-871 (DFADF) carry the DFXDF motif 3 motif. The span at 874-883 (SKFSSTSSDK) shows a compositional bias: low complexity. Residues Ser-904, Ser-944, Ser-947, Ser-997, Ser-1021, Ser-1088, Ser-1090, Ser-1102, and Ser-1113 each carry the phosphoserine modification. Positions 944 to 955 (SDSSLDLPTVSG) are enriched in polar residues. Residues 1016–1028 (ENTCPSPASSVAS) are compositionally biased toward polar residues. Thr-1115 carries the phosphothreonine modification.

Self-associates. Interacts with GGA1 (via GAE domain). Interacts with GGA2 and GGA3. Interacts with AP1G1 (via GAE domain), a subunit of adapter protein complex AP-1. Interacts with AP1G2 (via GAE domain) a subunit of adapter protein complex AP-1. Component of the aftiphilin/p200/gamma-synergin complex, at least composed of AFTPH/aftiphilin, HEATR5B/p200a and SYNRG/gamma-synergin, which plays a role in the AP1G1/AP-1-mediated trafficking of transferrin from early to recycling endosomes. Within the complex interacts with AFTPH/aftiphilin and HEATR5B/p200a; the interactions are direct. Interacts (via EH domain) with SCAMP1. As to expression, detected in brain and liver (at protein level). Ubiquitously expressed.

It is found in the cytoplasm. It localises to the golgi apparatus. The protein resides in the trans-Golgi network membrane. The protein localises to the perinuclear region. Its subcellular location is the cytoplasmic vesicle. It is found in the clathrin-coated vesicle. Its function is as follows. Plays a role in endocytosis and/or membrane trafficking at the trans-Golgi network (TGN). May act by linking the adapter protein complex AP-1 to other proteins. Component of clathrin-coated vesicles. Component of the aftiphilin/p200/gamma-synergin complex, which plays roles in AP1G1/AP-1-mediated protein trafficking including the trafficking of transferrin from early to recycling endosomes, and the membrane trafficking of furin and the lysosomal enzyme cathepsin D between the trans-Golgi network (TGN) and endosomes. The sequence is that of Synergin gamma (Synrg) from Rattus norvegicus (Rat).